We begin with the raw amino-acid sequence, 90 residues long: Secretoglobin family 1D member 1 (90 aa).

Residues 1–21 (MRLSVCLLLLTLALCCYRANA) form the signal peptide.

Heterodimer of a lipophilin A and a lipophilin C (mammaglobin B) monomer associated head to head. Expressed in lachrymal gland, thymus, kidney, testis, ovary and salivary gland.

It localises to the secreted. Functionally, may bind androgens and other steroids, may also bind estramustine, a chemotherapeutic agent used for prostate cancer. May be under transcriptional regulation of steroid hormones. The polypeptide is Secretoglobin family 1D member 1 (SCGB1D1) (Homo sapiens (Human)).